Reading from the N-terminus, the 58-residue chain is Small ribosomal subunit protein bS21 (58 aa).

It belongs to the bacterial ribosomal protein bS21 family.

The chain is Small ribosomal subunit protein bS21 from Staphylococcus aureus (strain bovine RF122 / ET3-1).